A 320-amino-acid polypeptide reads, in one-letter code: Cytochrome f (320 aa).

Positions 1 to 35 (MQNRNFNNLIIKWAIRLISIMIIINTIFWSSISEA) are cleaved as a signal peptide. Phenylalanine 36, cysteine 56, cysteine 59, and histidine 60 together coordinate heme. Residues 286-305 (IQGLLLFFGSVILAQIFLVL) traverse the membrane as a helical segment.

It belongs to the cytochrome f family. In terms of assembly, the 4 large subunits of the cytochrome b6-f complex are cytochrome b6, subunit IV (17 kDa polypeptide, petD), cytochrome f and the Rieske protein, while the 4 small subunits are PetG, PetL, PetM and PetN. The complex functions as a dimer. It depends on heme as a cofactor.

The protein resides in the plastid. It is found in the chloroplast thylakoid membrane. Its function is as follows. Component of the cytochrome b6-f complex, which mediates electron transfer between photosystem II (PSII) and photosystem I (PSI), cyclic electron flow around PSI, and state transitions. The protein is Cytochrome f (petA) of Marchantia polymorpha (Common liverwort).